A 708-amino-acid chain; its full sequence is MKLIIKNLILLLVSCLYFLSNVSCDQEVHMALLLEGQVDDLGINYEVNQGLAETEALIQRAAKVINDANSYDSTYDNIKSLLDQDNPYNLIITSSESQMSAALDIASDYEDTYFLIFGDMGDKKVPHSKVGTYYFNLVSPHFVLGFIAGGMGKSVGMVVPGPPTENYFTANAFYAGMKYYTSPAGAPNPSLSVVATSSYDDYDTATGAGRILLTKDIDICTQSQTDMTVANMFLNASKWAFGTNGFPQSNIYGNRIIQSVVHNFQVPFYEAATMVMKNTWKNGYNFFGDFNNNFFYLDYYSFLVDPLLKNQTEDLISTIKGGAKPYITNGLTYEKILEQTKLSTGITDLGYYAVPTTEVYTTGSINKTFMAVSILEMAICLIIGIIVIFFFSRNINIIYSTIPYCLTILLGASLIAVAIFLWNLRDLNTQICTSKIWMASLGYNVLIGFIIIKSSLIYFKFKEMVKSKNEKISPIPFGRIVLWFVPLLIIDCVLLIIYSTSGNPGKIDSLGLDGIGRYEYTQNCVNNLTGDIILYIILVFHGLQLLYGCVIAWKTRVIDLEEFIEAHDFATAIYLITFCSFIIVILMVGVTSTSNRNTIISACAIFSSFSCVLIIFGAKFWKIYKPVEDDGLPQIKLKPQKSYSGSGGSGNSSGSKSKKTSAHSSTSGVKSGTSAPTQTSQSAMASINIQNFVNPIEASSRAAAQNDN.

The first 24 residues, 1-24 (MKLIIKNLILLLVSCLYFLSNVSC), serve as a signal peptide directing secretion. N-linked (GlcNAc...) asparagine glycans are attached at residues asparagine 21, asparagine 235, asparagine 310, and asparagine 366. The Extracellular segment spans residues 25–370 (DQEVHMALLL…TTGSINKTFM (346 aa)). The helical transmembrane segment at 371 to 391 (AVSILEMAICLIIGIIVIFFF) threads the bilayer. At 392–401 (SRNINIIYST) the chain is on the cytoplasmic side. A helical membrane pass occupies residues 402 to 422 (IPYCLTILLGASLIAVAIFLW). Topologically, residues 423-435 (NLRDLNTQICTSK) are extracellular. The helical transmembrane segment at 436–456 (IWMASLGYNVLIGFIIIKSSL) threads the bilayer. Over 457–479 (IYFKFKEMVKSKNEKISPIPFGR) the chain is Cytoplasmic. Residues 480-500 (IVLWFVPLLIIDCVLLIIYST) traverse the membrane as a helical segment. Topologically, residues 501–531 (SGNPGKIDSLGLDGIGRYEYTQNCVNNLTGD) are extracellular. N-linked (GlcNAc...) asparagine glycosylation occurs at asparagine 527. A helical transmembrane segment spans residues 532–552 (IILYIILVFHGLQLLYGCVIA). The Cytoplasmic portion of the chain corresponds to 553–568 (WKTRVIDLEEFIEAHD). A helical transmembrane segment spans residues 569–589 (FATAIYLITFCSFIIVILMVG). Residues 590 to 597 (VTSTSNRN) are Extracellular-facing. Residues 598–618 (TIISACAIFSSFSCVLIIFGA) form a helical membrane-spanning segment. Over 619–708 (KFWKIYKPVE…SSRAAAQNDN (90 aa)) the chain is Cytoplasmic. The disordered stretch occupies residues 638–681 (KPQKSYSGSGGSGNSSGSKSKKTSAHSSTSGVKSGTSAPTQTSQ). Positions 669 to 681 (VKSGTSAPTQTSQ) are enriched in polar residues.

It in the N-terminal section; belongs to the BMP lipoprotein family. In the C-terminal section; belongs to the G-protein coupled receptor 3 family. GABA-B receptor subfamily.

The protein localises to the membrane. In Dictyostelium discoideum (Social amoeba), this protein is Metabotropic glutamate receptor-like protein L (far1).